We begin with the raw amino-acid sequence, 250 residues long: Uridylate kinase (250 aa).

Residue 17–20 (KLSG) coordinates ATP. Position 59 (glycine 59) interacts with UMP. ATP is bound by residues glycine 60 and arginine 64. UMP-binding positions include aspartate 79 and 140–147 (TGNPYFTT). ATP-binding residues include threonine 167, tyrosine 173, and aspartate 176.

The protein belongs to the UMP kinase family. In terms of assembly, homohexamer.

It localises to the cytoplasm. It carries out the reaction UMP + ATP = UDP + ADP. It functions in the pathway pyrimidine metabolism; CTP biosynthesis via de novo pathway; UDP from UMP (UMPK route): step 1/1. Its activity is regulated as follows. Inhibited by UTP. In terms of biological role, catalyzes the reversible phosphorylation of UMP to UDP. In Myxococcus xanthus (strain DK1622), this protein is Uridylate kinase.